Consider the following 162-residue polypeptide: SsrA-binding protein (162 aa).

Belongs to the SmpB family.

The protein localises to the cytoplasm. Its function is as follows. Required for rescue of stalled ribosomes mediated by trans-translation. Binds to transfer-messenger RNA (tmRNA), required for stable association of tmRNA with ribosomes. tmRNA and SmpB together mimic tRNA shape, replacing the anticodon stem-loop with SmpB. tmRNA is encoded by the ssrA gene; the 2 termini fold to resemble tRNA(Ala) and it encodes a 'tag peptide', a short internal open reading frame. During trans-translation Ala-aminoacylated tmRNA acts like a tRNA, entering the A-site of stalled ribosomes, displacing the stalled mRNA. The ribosome then switches to translate the ORF on the tmRNA; the nascent peptide is terminated with the 'tag peptide' encoded by the tmRNA and targeted for degradation. The ribosome is freed to recommence translation, which seems to be the essential function of trans-translation. This Sorangium cellulosum (strain So ce56) (Polyangium cellulosum (strain So ce56)) protein is SsrA-binding protein.